The following is a 139-amino-acid chain: Hydrogenase maturation factor HypA (139 aa).

His2 contacts Ni(2+). Cys73, Cys76, Cys110, and Cys113 together coordinate Zn(2+).

This sequence belongs to the HypA/HybF family.

Its function is as follows. Involved in the maturation of [NiFe] hydrogenases. Required for nickel insertion into the metal center of the hydrogenase. The protein is Hydrogenase maturation factor HypA of Pyrococcus abyssi (strain GE5 / Orsay).